A 500-amino-acid chain; its full sequence is Na(+)/H(+) antiporter NhaB (500 aa).

A run of 12 helical transmembrane segments spans residues 34-54 (PLFF…EFIF), 62-82 (CYPL…GMTT), 90-110 (LVHN…IYFM), 129-149 (ALLG…LDAL), 150-170 (TVTA…HRVA), 205-225 (LLMH…VGEP), 241-261 (FFSK…VTCV), 311-331 (ILIV…LLVI), 350-370 (FKDA…VAVI), 394-414 (MLFI…VATI), 449-469 (VATP…IAPL), and 477-497 (MVWM…YAVS).

Belongs to the NhaB Na(+)/H(+) (TC 2.A.34) antiporter family.

It localises to the cell inner membrane. The enzyme catalyses 2 Na(+)(in) + 3 H(+)(out) = 2 Na(+)(out) + 3 H(+)(in). Na(+)/H(+) antiporter that extrudes sodium in exchange for external protons. The chain is Na(+)/H(+) antiporter NhaB from Pseudomonas fluorescens (strain ATCC BAA-477 / NRRL B-23932 / Pf-5).